A 260-amino-acid polypeptide reads, in one-letter code: Thymidylate synthase (260 aa).

A dUMP-binding site is contributed by Arg21. Residue His51 coordinates (6R)-5,10-methylene-5,6,7,8-tetrahydrofolate. Position 122–123 (122–123 (RR)) interacts with dUMP. Cys142 serves as the catalytic Nucleophile. DUMP-binding positions include 162–165 (RSAD), Asn173, and 203–205 (HLY). Asp165 is a (6R)-5,10-methylene-5,6,7,8-tetrahydrofolate binding site. Ala259 is a binding site for (6R)-5,10-methylene-5,6,7,8-tetrahydrofolate.

It belongs to the thymidylate synthase family. Bacterial-type ThyA subfamily. Homodimer.

It is found in the cytoplasm. It carries out the reaction dUMP + (6R)-5,10-methylene-5,6,7,8-tetrahydrofolate = 7,8-dihydrofolate + dTMP. The protein operates within pyrimidine metabolism; dTTP biosynthesis. In terms of biological role, catalyzes the reductive methylation of 2'-deoxyuridine-5'-monophosphate (dUMP) to 2'-deoxythymidine-5'-monophosphate (dTMP) while utilizing 5,10-methylenetetrahydrofolate (mTHF) as the methyl donor and reductant in the reaction, yielding dihydrofolate (DHF) as a by-product. This enzymatic reaction provides an intracellular de novo source of dTMP, an essential precursor for DNA biosynthesis. The polypeptide is Thymidylate synthase (Methylococcus capsulatus (strain ATCC 33009 / NCIMB 11132 / Bath)).